Consider the following 393-residue polypeptide: Peptidyl-prolyl cis-trans isomerase CYP7 (393 aa).

Residues 8 to 196 (YLDISIDKKP…SDVRISDCGV (189 aa)) form the PPIase cyclophilin-type domain. 3 TPR repeats span residues 240-273 (ANII…INEY), 292-325 (MKIY…DNVP), and 330-363 (AKAY…NPDD).

In terms of assembly, interacts with RPD3 and CNS1.

It carries out the reaction [protein]-peptidylproline (omega=180) = [protein]-peptidylproline (omega=0). PPIases accelerate the folding of proteins. It catalyzes the cis-trans isomerization of proline imidic peptide bonds in oligopeptides. Plays a major role in negative regulation of the heat shock transcription factor (HSF). The polypeptide is Peptidyl-prolyl cis-trans isomerase CYP7 (CPR7) (Saccharomyces cerevisiae (strain ATCC 204508 / S288c) (Baker's yeast)).